Consider the following 242-residue polypeptide: 7-cyano-7-deazaguanine synthase (242 aa).

The tract at residues 1 to 25 (MNSRKDKNSKGKNSDTKRKKSSQEN) is disordered. ATP is bound at residue 32-42 (LSGGLDSTTCL). Cysteine 212, cysteine 221, cysteine 224, and cysteine 227 together coordinate Zn(2+).

This sequence belongs to the QueC family. It depends on Zn(2+) as a cofactor.

It catalyses the reaction 7-carboxy-7-deazaguanine + NH4(+) + ATP = 7-cyano-7-deazaguanine + ADP + phosphate + H2O + H(+). It participates in purine metabolism; 7-cyano-7-deazaguanine biosynthesis. Functionally, catalyzes the ATP-dependent conversion of 7-carboxy-7-deazaguanine (CDG) to 7-cyano-7-deazaguanine (preQ(0)). This Leptospira borgpetersenii serovar Hardjo-bovis (strain JB197) protein is 7-cyano-7-deazaguanine synthase.